The sequence spans 415 residues: Corticotropin-releasing factor receptor 1 (415 aa).

The N-terminal stretch at 1 to 23 (MARHPQLRLVKALLLLGLNPVSA) is a signal peptide. At 24–111 (SLQDQHCESL…CQEILNEEKK (88 aa)) the chain is on the extracellular side. 3 cysteine pairs are disulfide-bonded: C30–C54, C44–C87, and C68–C102. 3 N-linked (GlcNAc...) asparagine glycosylation sites follow: N38, N78, and N98. The segment at 99 to 108 (YSECQEILNE) is important for peptide agonist binding. A helical transmembrane segment spans residues 112 to 142 (SKVHYHVAVIINYLGHCISLVALLVAFVLFL). The Cytoplasmic portion of the chain corresponds to 143-149 (RLRSIRC). Residues 150–174 (LRNIIHWNLISAFILRNATWFVVQL) traverse the membrane as a helical segment. Residues 175–189 (TMSPEVHQSNVGWCR) lie on the Extracellular side of the membrane. An intrachain disulfide couples C188 to C258. Residues 190 to 218 (LVTAAYNYFHVTNFFWMFGEGCYLHTAIV) traverse the membrane as a helical segment. Residues 219 to 225 (LTYSTDR) lie on the Cytoplasmic side of the membrane. Residues 226–253 (LRKWMFICIGWGVPFPIIVAWAIGKLYY) form a helical membrane-spanning segment. Topologically, residues 254-269 (DNEKCWFGKRPGVYTD) are extracellular. Residues 270–295 (YIYQGPMILVLLINFIFLFNIVRILM) traverse the membrane as a helical segment. Positions 280-290 (LLINFIFLFNI) are important for antagonist binding. Topologically, residues 296-306 (TKLRASTTSET) are cytoplasmic. Position 301 is a phosphoserine; by PKA (S301). A helical membrane pass occupies residues 307-331 (IQYRKAVKATLVLLPLLGITYMLFF). Residues 332 to 338 (VNPGEDE) are Extracellular-facing. The chain crosses the membrane as a helical span at residues 339–368 (VSRVVFIYFNSFLESFQGFFVSVFYCFLNS). Residues 369–415 (EVRSAIRKRWHRWQDKHSIRARVARAMSIPTSPTRVSFHSIKQSTAV) lie on the Cytoplasmic side of the membrane.

The protein belongs to the G-protein coupled receptor 2 family. In terms of assembly, heterodimer; heterodimerizes with GPER1. Interacts (via N-terminal extracellular domain) with CRH and UCN. Interacts with DLG1; this inhibits endocytosis of CRHR1 after agonist binding. C-terminal Ser or Thr residues may be phosphorylated. Post-translationally, phosphorylation at Ser-301 by PKA prevents maximal coupling to Gq-protein, and thereby negatively regulates downstream signaling. As to expression, expressed abundantly in the pituitary, cerebral cortex, hippocampus, amygdala and cerebellum.

Its subcellular location is the cell membrane. It localises to the endosome. In terms of biological role, G-protein coupled receptor for CRH (corticotropin-releasing factor) and UCN (urocortin). Has high affinity for CRH and UCN. Ligand binding causes a conformation change that triggers signaling via guanine nucleotide-binding proteins (G proteins) and down-stream effectors, such as adenylate cyclase. Promotes the activation of adenylate cyclase, leading to increased intracellular cAMP levels. Inhibits the activity of the calcium channel CACNA1H. Required for normal embryonic development of the adrenal gland and for normal hormonal responses to stress. Plays a role in the response to anxiogenic stimuli. This is Corticotropin-releasing factor receptor 1 (CRHR1) from Macaca mulatta (Rhesus macaque).